A 95-amino-acid polypeptide reads, in one-letter code: Class II hydrophobin 3 (95 aa).

The N-terminal stretch at 1 to 16 is a signal peptide; sequence MKLLAVAALLAGAAIA. Disulfide bonds link Cys28–Cys77, Cys38–Cys68, Cys39–Cys51, and Cys78–Cys89.

It belongs to the cerato-ulmin hydrophobin family.

Its subcellular location is the secreted. It localises to the cell wall. Aerial growth, conidiation, and dispersal of filamentous fungi in the environment rely upon a capability of their secreting small amphipathic proteins called hydrophobins (HPBs) with low sequence identity. Class I can self-assemble into an outermost layer of rodlet bundles on aerial cell surfaces, conferring cellular hydrophobicity that supports fungal growth, development and dispersal; whereas Class II form highly ordered films at water-air interfaces through intermolecular interactions but contribute nothing to the rodlet structure. Hyd3 plays a neglectable role in hyphal growth and asexual development and does not seem involved in cellular hydrophobicity, conidial adhesion, stress tolerance nor insect pathogenicity. The protein is Class II hydrophobin 3 of Metarhizium robertsii (strain ARSEF 23 / ATCC MYA-3075) (Metarhizium anisopliae (strain ARSEF 23)).